Here is a 273-residue protein sequence, read N- to C-terminus: Outer surface protein A (273 aa).

Positions 1 to 16 (MKKYLLGIGLILALIA) are cleaved as a signal peptide. Residue Cys-17 is the site of N-palmitoyl cysteine attachment. A lipid anchor (S-diacylglycerol cysteine) is attached at Cys-17.

The protein belongs to the OspA lipoprotein family.

It localises to the cell outer membrane. The protein localises to the cell surface. In Borreliella burgdorferi (Lyme disease spirochete), this protein is Outer surface protein A.